We begin with the raw amino-acid sequence, 250 residues long: Isoprenyl transferase (250 aa).

The active site involves Asp-26. Asp-26 is a binding site for Mg(2+). Substrate is bound by residues 27 to 30 (GNGR), Trp-31, Arg-39, His-43, and 71 to 73 (STE). Residue Asn-74 is the Proton acceptor of the active site. Substrate is bound by residues Trp-75, Arg-77, Arg-198, and 204–206 (RLS). Glu-217 contributes to the Mg(2+) binding site.

This sequence belongs to the UPP synthase family. Homodimer. It depends on Mg(2+) as a cofactor.

In terms of biological role, catalyzes the condensation of isopentenyl diphosphate (IPP) with allylic pyrophosphates generating different type of terpenoids. The sequence is that of Isoprenyl transferase from Streptococcus agalactiae serotype V (strain ATCC BAA-611 / 2603 V/R).